Reading from the N-terminus, the 646-residue chain is bZIP transcription factor 39 (646 aa).

At 1–311 (MAEPALLDPT…KSKSKTKTKK (311 aa)) the chain is on the cytoplasmic side. The segment at 25–172 (HELPLAGGGG…GGTVCEEEED (148 aa)) is disordered. The span at 43–53 (LDGLEFDLPGD) shows a compositional bias: low complexity. Positions 59 to 69 (FLLRSPERDDS) are enriched in basic and acidic residues. Residues 71 to 98 (EGSAAGSGPTASPSSSPTTSASNSAVAN) are compositionally biased toward low complexity. Residues 103 to 113 (EVKHEESDEGR) show a composition bias toward basic and acidic residues. Positions 159 to 172 (DSDEGGTVCEEEED) are enriched in acidic residues. Positions 172–232 (DERRAARLMR…AENATLRQQL (61 aa)) constitute a bZIP domain. The segment at 174–205 (RRAARLMRNRESAQLSRQRKKRYVEELEEKVK) is basic motif. The leucine-zipper stretch occupies residues 211 to 218 (INDLNSRI). Residues 272–308 (LVPIPRLKPQQPVPSSKVVKKPESKKTVENKSKSKTK) form a disordered region. Residues 279–288 (KPQQPVPSSK) show a composition bias toward low complexity. Positions 291 to 303 (KKPESKKTVENKS) are enriched in basic and acidic residues. The chain crosses the membrane as a helical span at residues 312–332 (VASVSLLGLLLIMLVFGAFIP). Residues 333–646 (GFNHNFGMCG…FKSSSPHLVN (314 aa)) lie on the Lumenal side of the membrane. Asn371, Asn399, Asn525, Asn530, Asn565, and Asn571 each carry an N-linked (GlcNAc...) asparagine glycan. A disordered region spans residues 560-585 (TGKTANNTEPFNRTSESSSKLPDSKP). A compositionally biased stretch (polar residues) spans 562-585 (KTANNTEPFNRTSESSSKLPDSKP).

Belongs to the bZIP family. As to expression, highly expressed in leaf blade, and at lower levels in roots, leaf sheaths, flowers and seeds.

It localises to the endoplasmic reticulum membrane. The protein localises to the nucleus. Functionally, transcription factor involved in endoplasmic reticulum (ER) stress response. Acts as a ER stress sensor and activates the transcription factor BZIP50 and the chaperone BIP1. The protein is bZIP transcription factor 39 of Oryza sativa subsp. japonica (Rice).